We begin with the raw amino-acid sequence, 193 residues long: Translocation protein SEC72 (193 aa).

As to quaternary structure, component of the heterotetrameric Sec62/63complex composed of SEC62, SEC63, SEC71 and SEC72. The Sec62/63 complex associates with the Sec61 complex to form the Sec complex. May interact with protein YLR301W. Part of a complex consisting of KAR2, SEC63, SEC66 and SEC72.

The protein resides in the cytoplasm. Functionally, acts as a non-essential component of the Sec62/63 complex which is involved in SRP-independent post-translational translocation across the endoplasmic reticulum (ER) and functions together with the Sec61 complex and KAR2 in a channel-forming translocon complex. A cycle of assembly and disassembly of Sec62/63 complex from SEC61 may govern the activity of the translocon. SEC72 may be involved in signal peptide recognition for a defined subset of leader peptides, or may increase the efficiency of unusual or 'difficult' secretory precursors to the translocation pore, it may be that this protein binds charged leader peptides to the membrane until they engage the translocation apparatus. This is Translocation protein SEC72 (SEC72) from Saccharomyces cerevisiae (strain ATCC 204508 / S288c) (Baker's yeast).